A 308-amino-acid polypeptide reads, in one-letter code: UPF0282 protein YG5714_2245 (308 aa).

It belongs to the UPF0282 family.

This chain is UPF0282 protein YG5714_2245, found in Saccharolobus islandicus (strain Y.G.57.14 / Yellowstone #1) (Sulfolobus islandicus).